A 467-amino-acid chain; its full sequence is Mitochondrial adenyl nucleotide antiporter SLC25A23 (467 aa).

The segment at 1-148 is regulatory N-terminal domain; it reads MRGGSSDAER…DHFLLHSLEN (148 aa). The Mitochondrial intermembrane segment spans residues 1–187; sequence MRGGSSDAER…EKLTGMWWKQ (187 aa). EF-hand domains are found at residues 9 to 44, 76 to 111, and 112 to 147; these read ERRQRWGRLFEELDSNKDGRVDVHELRQGLARLGRG, EREQRLLLMFHSLDRNQDGHIDVSEIQQSFRALGIS, and ISLEQAEKILHSMDRDGTMTIDWQEWRDHFLLHSLE. Residues D22, N24, D26, R28, and E33 each coordinate Ca(2+). Positions 39 to 61 are disordered; sequence ARLGRGDPDRAQQGVSSDWDADP. Residues D89, N91, D93, H95, and E100 each contribute to the Ca(2+) site. The interval 149–158 is linker region; sequence VEDVLYFWKH. A C-terminal transmembrane transporter domain region spans residues 164–467; the sequence is IGECLTVPDE…MKQALGVTSR (304 aa). Solcar repeat units lie at residues 182 to 268, 276 to 361, and 373 to 461; these read GMWW…IKRA, LHVQ…LKNR, and PGIL…MKQA. A helical membrane pass occupies residues 188 to 205; sequence LVAGAVAGAVSRTGTAPL. The Mitochondrial matrix portion of the chain corresponds to 206–242; the sequence is DRLKVFMQVHASKSNRLNILGGLRNMIQEGGVLSLWR. A helical membrane pass occupies residues 243–262; that stretch reads GNGINVLKIAPESAIKFMAY. The Mitochondrial intermembrane portion of the chain corresponds to 263-285; sequence EQIKRAIRGQQETLHVQERFVAG. The helical transmembrane segment at 286–299 threads the bilayer; sequence SLAGATAQTIIYPM. Over 300-335 the chain is Mitochondrial matrix; the sequence is EVLKTRLTLRRTGQYKGLLDCAKRILEREGPRAFYR. Residues 336–355 form a helical membrane-spanning segment; the sequence is GYLPNVLGIIPYAGIDLAVY. The Mitochondrial intermembrane segment spans residues 356–378; the sequence is ETLKNRWLQQYSHESANPGILVL. The chain crosses the membrane as a helical span at residues 379-396; that stretch reads LGCGTISSTCGQIASYPL. Residues 397–435 lie on the Mitochondrial matrix side of the membrane; that stretch reads ALVRTRMQAQASIEGGPQVSMVGLLRHILSQEGVWGLYR. A helical transmembrane segment spans residues 436–455; the sequence is GIAPNFMKVIPAVSISYVVY. Residues 456–467 are Mitochondrial intermembrane-facing; it reads ENMKQALGVTSR.

This sequence belongs to the mitochondrial carrier (TC 2.A.29) family. As to quaternary structure, interacts with MCU. Interacts with MICU1.

The protein resides in the mitochondrion inner membrane. The catalysed reaction is Mg(2+)(out) + phosphate(in) + ATP(out) = Mg(2+)(in) + phosphate(out) + ATP(in). It catalyses the reaction ADP(out) + phosphate(in) + H(+)(out) = ADP(in) + phosphate(out) + H(+)(in). The enzyme catalyses AMP(out) + phosphate(in) = AMP(in) + phosphate(out). It carries out the reaction phosphate(in) + ATP(out) + 2 H(+)(out) = phosphate(out) + ATP(in) + 2 H(+)(in). The catalysed reaction is dADP(in) + ADP(out) = dADP(out) + ADP(in). It catalyses the reaction Mg(2+)(in) + ADP(out) + ATP(in) + H(+)(out) = Mg(2+)(out) + ADP(in) + ATP(out) + H(+)(in). The enzyme catalyses ADP(out) + diphosphate(in) = ADP(in) + diphosphate(out). It carries out the reaction dAMP(in) + ADP(out) + H(+)(out) = dAMP(out) + ADP(in) + H(+)(in). The catalysed reaction is 3'-AMP(in) + ADP(out) + H(+)(out) = 3'-AMP(out) + ADP(in) + H(+)(in). It catalyses the reaction dAMP(out) + phosphate(in) = dAMP(in) + phosphate(out). The enzyme catalyses 3'-AMP(out) + phosphate(in) = 3'-AMP(in) + phosphate(out). It carries out the reaction dADP(out) + phosphate(in) + H(+)(out) = dADP(in) + phosphate(out) + H(+)(in). With respect to regulation, activated by an increase in cytosolic calcium levels that induce a conformational change of the N-terminal regulatory domain, uncapping the channel and allowing transport. Its function is as follows. Electroneutral antiporter that mediates the transport of adenine nucleotides through the inner mitochondrial membrane. Originally identified as an ATP-magnesium/inorganic phosphate antiporter, it also acts as a broad specificity adenyl nucleotide antiporter. By regulating the mitochondrial matrix adenine nucleotide pool could adapt to changing cellular energetic demands and indirectly regulate adenine nucleotide-dependent metabolic pathways. Also acts as a regulator of mitochondrial calcium uptake and can probably transport trace amounts of other divalent metal cations in complex with ATP. In vitro, a low activity is also observed with guanyl and pyrimidine nucleotides. This is Mitochondrial adenyl nucleotide antiporter SLC25A23 from Mus musculus (Mouse).